We begin with the raw amino-acid sequence, 734 residues long: Polyribonucleotide nucleotidyltransferase (734 aa).

Mg(2+) contacts are provided by Asp-497 and Asp-503. In terms of domain architecture, KH spans 564-623 (PRIIHITIDPDKIRDVIGPGGKVIKKIVEETGAEIDIEDDGRVFIAAVDQEKGRKAQEII). The S1 motif domain occupies 633–707 (GEIYTGRVTR…SQGRLKLSKK (75 aa)). The disordered stretch occupies residues 700-734 (GRLKLSKKEATPPPESTAMKEGRAHRPSRRRESAR). Residues 717 to 734 (AMKEGRAHRPSRRRESAR) show a composition bias toward basic and acidic residues.

It belongs to the polyribonucleotide nucleotidyltransferase family. Mg(2+) serves as cofactor.

Its subcellular location is the cytoplasm. It carries out the reaction RNA(n+1) + phosphate = RNA(n) + a ribonucleoside 5'-diphosphate. Involved in mRNA degradation. Catalyzes the phosphorolysis of single-stranded polyribonucleotides processively in the 3'- to 5'-direction. This chain is Polyribonucleotide nucleotidyltransferase, found in Pelotomaculum thermopropionicum (strain DSM 13744 / JCM 10971 / SI).